A 342-amino-acid chain; its full sequence is Serine/threonine-protein kinase-transforming protein mos (342 aa).

Positions 63 to 338 (VCLMHRLGSG…LLQRDLKAFR (276 aa)) constitute a Protein kinase domain. Residues 69–77 (LGSGGFGSV) and Lys-90 each bind ATP. The active-site Proton acceptor is Asp-198.

It belongs to the protein kinase superfamily. Ser/Thr protein kinase family.

The enzyme catalyses L-seryl-[protein] + ATP = O-phospho-L-seryl-[protein] + ADP + H(+). It carries out the reaction L-threonyl-[protein] + ATP = O-phospho-L-threonyl-[protein] + ADP + H(+). The chain is Serine/threonine-protein kinase-transforming protein mos (V-MOS) from Myeloproliferative sarcoma virus (isolate ts159).